Here is a 686-residue protein sequence, read N- to C-terminus: tRNA 5-methylaminomethyl-2-thiouridine biosynthesis bifunctional protein MnmC (686 aa).

A tRNA (mnm(5)s(2)U34)-methyltransferase region spans residues 1–258 (MPNIPLRVNS…RRALRRQQLD (258 aa)). The interval 276-686 (IGGGVASANL…MRKLIKGKAL (411 aa)) is FAD-dependent cmnm(5)s(2)U34 oxidoreductase.

In the N-terminal section; belongs to the methyltransferase superfamily. tRNA (mnm(5)s(2)U34)-methyltransferase family. The protein in the C-terminal section; belongs to the DAO family. FAD is required as a cofactor.

It localises to the cytoplasm. It carries out the reaction 5-aminomethyl-2-thiouridine(34) in tRNA + S-adenosyl-L-methionine = 5-methylaminomethyl-2-thiouridine(34) in tRNA + S-adenosyl-L-homocysteine + H(+). Catalyzes the last two steps in the biosynthesis of 5-methylaminomethyl-2-thiouridine (mnm(5)s(2)U) at the wobble position (U34) in tRNA. Catalyzes the FAD-dependent demodification of cmnm(5)s(2)U34 to nm(5)s(2)U34, followed by the transfer of a methyl group from S-adenosyl-L-methionine to nm(5)s(2)U34, to form mnm(5)s(2)U34. The chain is tRNA 5-methylaminomethyl-2-thiouridine biosynthesis bifunctional protein MnmC from Shewanella loihica (strain ATCC BAA-1088 / PV-4).